The sequence spans 616 residues: DNA-binding protein RFX5 (616 aa).

The disordered stretch occupies residues M1–T29. A2 carries the post-translational modification N-acetylalanine. S10 carries the phosphoserine modification. Residues T13–T29 are compositionally biased toward low complexity. The segment at G25–M90 is N-terminal domain. The segment at L62–L66 is leucine-rich region; critical for dimer formation and for interaction with RFXAP. Residues A92 to T168 constitute a DNA-binding region (RFX-type winged-helix). A PxLPxI/L motif; mediates interaction with RFXANK motif is present at residues P173 to L178. A Phosphoserine modification is found at S185. 2 disordered regions span residues A252 to A314 and L391 to P616. Over residues G276–A293 the composition is skewed to basic and acidic residues. Pro residues predominate over residues L391 to A401. The span at G424–A434 shows a compositional bias: basic and acidic residues. The span at K463 to S473 shows a compositional bias: basic residues. A compositionally biased stretch (gly residues) spans Q534–P546. The segment covering Q606–P616 has biased composition (basic and acidic residues).

The protein belongs to the RFX family. Homodimer. The RFX heterotetrameric complex consists of 2 molecules of RFX5 and one each of RFXAP and RFX-B/RFXANK; with each subunit representing a separate complementation group. Interacts (via PxLPxI/L motif) with RFXANK (via ankyrin repeats); the interaction is direct. RFX forms cooperative DNA binding complexes with X2BP and CBF/NF-Y. RFX associates with CIITA to form an active transcriptional complex. Post-translationally, phosphorylated. As to expression, ubiquitous.

It localises to the nucleus. Functionally, activates transcription from class II MHC promoters. Recognizes X-boxes. Mediates cooperative binding between RFX and NF-Y. RFX binds the X1 box of MHC-II promoters. This Homo sapiens (Human) protein is DNA-binding protein RFX5 (RFX5).